Here is a 1550-residue protein sequence, read N- to C-terminus: Cellulose synthase 1 (1550 aa).

Residues 1–741 form a catalytic region; sequence MPEVRSSTQS…KERVLKGTVK (741 aa). A run of 3 helical transmembrane segments spans residues 26–46, 47–67, and 106–126; these read GAGLIIGVFGLCALIAATSVT, LPPEQQLIVAFVCVVIFFIVG, and GLLGTMLLVAELYALMMLFLS. The catalytic subdomain A stretch occupies residues 147-240; it reads EWPTVDIFVP…YILIFDCDHV (94 aa). The active site involves D189. Substrate contacts are provided by D236 and D238. Residues 317 to 377 form a catalytic subdomain B region; that stretch reads TAIEQIGGFA…GQRVRWARGM (61 aa). The active site involves D333. 5 helical membrane passes run 398–418, 423–443, 468–488, 507–527, and 547–567; these read LCYLSAMTSFLFAVPRVIFLS, FLFFGQNIIAASPLALLAYAI, VYETTMALFLVRVTIVTLLSP, FDLGAVYPNIILGLIMFGGLA, and LLNSAWAMLSLIIILAAIAVG. A PilZ domain is found at 572–647; it reads QKRNSHRIPA…PARIIRAGNG (76 aa). Disordered stretches follow at residues 708–731 and 768–813; these read VHRSSPTKPSAGNALSDDTNNPSR and APAH…QPLA. The segment at 742 to 1550 is cyclic di-GMP binding domain; it reads MVSLLALLTF…KQLEDERRKS (809 aa). Residues 768–796 are compositionally biased toward low complexity; the sequence is APAHQPEASDLPPLPALLPATSGAAQAGS. Residues 1513 to 1533 traverse the membrane as a helical segment; the sequence is VLLVGLLGCILIVSVLARALA.

The protein in the N-terminal section; belongs to the glycosyltransferase 2 family. This sequence in the C-terminal section; belongs to the AcsB/BcsB family. Mg(2+) serves as cofactor.

Its subcellular location is the cell inner membrane. It carries out the reaction [(1-&gt;4)-beta-D-glucosyl](n) + UDP-alpha-D-glucose = [(1-&gt;4)-beta-D-glucosyl](n+1) + UDP + H(+). The protein operates within glycan metabolism; bacterial cellulose biosynthesis. Its function is as follows. Bifunctional protein comprised of a catalytic subunit and a regulatory subunit. The catalytic subunit of cellulose synthase polymerizes uridine 5'-diphosphate glucose to cellulose in a processive way. The thick cellulosic mats generated by this enzyme probably provide a specialized protective environment to the bacterium. The regulatory subunit binds bis-(3'-5') cyclic diguanylic acid (c-di-GMP). This Novacetimonas hansenii (Komagataeibacter hansenii) protein is Cellulose synthase 1 (acsAB).